A 120-amino-acid chain; its full sequence is Large ribosomal subunit protein bL17 (120 aa).

Belongs to the bacterial ribosomal protein bL17 family. In terms of assembly, part of the 50S ribosomal subunit. Contacts protein L32.

The polypeptide is Large ribosomal subunit protein bL17 (Geobacillus kaustophilus (strain HTA426)).